We begin with the raw amino-acid sequence, 270 residues long: UPF0354 protein BCE_4835 (270 aa).

The protein belongs to the UPF0354 family.

The chain is UPF0354 protein BCE_4835 from Bacillus cereus (strain ATCC 10987 / NRS 248).